The primary structure comprises 967 residues: RNA polymerase-associated protein RapA (967 aa).

In terms of domain architecture, Helicase ATP-binding spans 163 to 333 (EVGQRHAPRV…FARLRLLDPN (171 aa)). 176 to 183 (DEVGLGKT) provides a ligand contact to ATP. A DEAH box motif is present at residues 279-282 (DEAH). The 155-residue stretch at 489–643 (RVEWLLNYLT…TCPTGRTIYD (155 aa)) folds into the Helicase C-terminal domain.

Belongs to the SNF2/RAD54 helicase family. RapA subfamily. As to quaternary structure, interacts with the RNAP. Has a higher affinity for the core RNAP than for the holoenzyme. Its ATPase activity is stimulated by binding to RNAP.

Its function is as follows. Transcription regulator that activates transcription by stimulating RNA polymerase (RNAP) recycling in case of stress conditions such as supercoiled DNA or high salt concentrations. Probably acts by releasing the RNAP, when it is trapped or immobilized on tightly supercoiled DNA. Does not activate transcription on linear DNA. Probably not involved in DNA repair. This chain is RNA polymerase-associated protein RapA, found in Pectobacterium carotovorum subsp. carotovorum (strain PC1).